Consider the following 967-residue polypeptide: Sarcosine oxidase subunit alpha (967 aa).

NAD(+) contacts are provided by A141, D160, E161, R162, S168, V207, A420, and T427. (6R)-5,10-methylene-5,6,7,8-tetrahydrofolate-binding residues include T694 and E786.

It belongs to the GcvT family. Heterotetramer composed of subunits alpha (SoxA), beta (SoxB), gamma (SoxG) and delta (SoxD). It depends on NAD(+) as a cofactor.

The protein resides in the cytoplasm. The catalysed reaction is sarcosine + (6S)-5,6,7,8-tetrahydrofolate + O2 = (6R)-5,10-methylene-5,6,7,8-tetrahydrofolate + glycine + H2O2. The enzyme catalyses sarcosine + O2 + H2O = formaldehyde + glycine + H2O2. Its function is as follows. In the presence of tetrahydrofolate, catalyzes the oxidative demethylation of sarcosine to yield glycine, 5,10-methylenetetrahydrofolate and hydrogen peroxide. In the absence of tetrahydrofolate, catalyzes the oxidative demethylation of sarcosine to yield glycine, formaldehyde and hydrogen peroxide. In Corynebacterium sp. (strain P-1), this protein is Sarcosine oxidase subunit alpha.